Here is a 147-residue protein sequence, read N- to C-terminus: Acidic phospholipase A2 1 (147 aa).

Positions 1–19 (MNPAHLLVLAAVCVSLLGA) are cleaved as a signal peptide. Residues 20-27 (AIVPPQPL) constitute a propeptide that is removed on maturation. 7 disulfide bridges follow: cysteine 38–cysteine 99, cysteine 54–cysteine 146, cysteine 56–cysteine 72, cysteine 71–cysteine 127, cysteine 78–cysteine 120, cysteine 88–cysteine 113, and cysteine 106–cysteine 118. Tyrosine 55, glycine 57, and glycine 59 together coordinate Ca(2+). Histidine 75 is an active-site residue. Aspartate 76 provides a ligand contact to Ca(2+). Residue aspartate 121 is part of the active site.

It belongs to the phospholipase A2 family. Group I subfamily. D49 sub-subfamily. Ca(2+) serves as cofactor. As to expression, expressed by the venom gland.

It localises to the secreted. It carries out the reaction a 1,2-diacyl-sn-glycero-3-phosphocholine + H2O = a 1-acyl-sn-glycero-3-phosphocholine + a fatty acid + H(+). PLA2 catalyzes the calcium-dependent hydrolysis of the 2-acyl groups in 3-sn-phosphoglycerides. This chain is Acidic phospholipase A2 1, found in Bungarus flaviceps flaviceps (Red-headed krait).